A 1919-amino-acid polypeptide reads, in one-letter code: Disks large homolog 5 (1919 aa).

The tract at residues alanine 98–valine 142 is disordered. The span at serine 109–serine 123 shows a compositional bias: low complexity. 2 positions are modified to phosphoserine: serine 264 and serine 295. A coiled-coil region spans residues leucine 383 to leucine 599. PDZ domains lie at valine 620–lysine 710 and valine 705–phenylalanine 796. Phosphoserine is present on serine 900. Disordered stretches follow at residues glycine 927–lysine 1122, glutamine 1150–threonine 1187, serine 1201–arginine 1230, glutamate 1245–serine 1264, and alanine 1271–proline 1306. The residue at position 984 (threonine 984) is a Phosphothreonine. Serine 1000 is modified (phosphoserine). At threonine 1011 the chain carries Phosphothreonine. Positions arginine 1017 to threonine 1030 are enriched in basic and acidic residues. At serine 1021 the chain carries Phosphoserine. Over residues threonine 1045–valine 1055 the composition is skewed to pro residues. Threonine 1183 is subject to Phosphothreonine. Phosphoserine is present on residues serine 1209 and serine 1263. Low complexity-rich tracts occupy residues serine 1252 to serine 1264 and arginine 1284 to glutamate 1298. Serine 1334 bears the Phosphoserine mark. The 80-residue stretch at histidine 1350–proline 1429 folds into the PDZ 3 domain. The interval leucine 1434–alanine 1493 is disordered. Over residues threonine 1449–glutamate 1462 the composition is skewed to polar residues. One can recognise a PDZ 4 domain in the interval arginine 1501–proline 1582. The SH3 domain occupies glycine 1593–phenylalanine 1661. At serine 1666 the chain carries Phosphoserine. Residues aspartate 1722–asparagine 1905 enclose the Guanylate kinase-like domain.

The protein belongs to the MAGUK family. Interacts with MPP1. Interacts with CTNNB1 and with the third SH3 domain of SORBS3 to form a ternary complex. Interacts (via coiled-coil domain) with MARK3. Interacts (via PDZ domain 3) with STK3/MST2 and STK4/MST1. Interacts with SCRIB. Interacts with CTNB1, SMO and (via PDZ4 or guanylate kinase-like domain) with KIF7. In terms of tissue distribution, highly expressed in normal breast tissues and low-grade breast cancer tissues (at protein level). Highly expressed in the placenta and prostate. Expressed at a lower level in the thyroid, spinal cord, trachea, adrenal gland, skeletal muscle, pancreas, heart, brain, liver and kidney. A short splice product shows more limited expression, being absent from at least the brain.

The protein localises to the cell junction. The protein resides in the cell membrane. It is found in the postsynaptic density. It localises to the cytoplasm. Its subcellular location is the cytoskeleton. The protein localises to the cilium basal body. In terms of biological role, acts as a regulator of the Hippo signaling pathway. Negatively regulates the Hippo signaling pathway by mediating the interaction of MARK3 with STK3/4, bringing them together to promote MARK3-dependent hyperphosphorylation and inactivation of STK3 kinase activity toward LATS1. Positively regulates the Hippo signaling pathway by mediating the interaction of SCRIB with STK4/MST1 and LATS1 which is important for the activation of the Hippo signaling pathway. Involved in regulating cell proliferation, maintenance of epithelial polarity, epithelial-mesenchymal transition (EMT), cell migration and invasion. Plays an important role in dendritic spine formation and synaptogenesis in cortical neurons; regulates synaptogenesis by enhancing the cell surface localization of N-cadherin. Acts as a positive regulator of hedgehog (Hh) signaling pathway. Plays a critical role in the early point of the SMO activity cycle by interacting with SMO at the ciliary base to induce the accumulation of KIF7 and GLI2 at the ciliary tip for GLI2 activation. This is Disks large homolog 5 (DLG5) from Homo sapiens (Human).